A 152-amino-acid polypeptide reads, in one-letter code: UPF0225 protein YchJ (152 aa).

This sequence belongs to the UPF0225 family.

The sequence is that of UPF0225 protein YchJ from Salmonella gallinarum (strain 287/91 / NCTC 13346).